We begin with the raw amino-acid sequence, 334 residues long: MSVNYAAGLSPYADKGKCGLPEIFDPPEELERKVWELARLMWQSSSVVFHTGAGISTASGIPDFRGPHGVWTMEERGLAPKFDTTFENARPSKTHMALVQLERMGFLSFLVSQNVDGLHVRSGFPRDKLAELHGNMFVEECPKCKTQYVRDTVVGTMGLKATGRLCTVAKTRGLRACRGELRDTILDWEDSLPDRDLMLADEASRTADLSVTLGTSLQIRPSGNLPLATKRRGGRLVIVNLQPTKHDRQADLRIHGYVDEVMCRLMKHLGLEIPAWDGPCVLDKALPPLPRPVALKAEPPVHLNGAVHVSYKSKPNSPILHRPPKRVKTEAAPS.

Ser-2 carries the post-translational modification N-acetylserine. Phosphoserine is present on Ser-10. Positions 27 to 272 (PEELERKVWE…CRLMKHLGLE (246 aa)) constitute a Deacetylase sirtuin-type domain. Lys-33 is subject to N6-acetyllysine. 7 residues coordinate NAD(+): Ala-53, Thr-57, Phe-64, Arg-65, Trp-71, Gln-113, and His-133. The active-site Proton acceptor is His-133. Zn(2+) contacts are provided by Cys-141, Cys-144, and Cys-166. Residue Lys-170 forms a Glycyl lysine isopeptide (Lys-Gly) (interchain with G-Cter in ubiquitin) linkage. Cys-177 serves as a coordination point for Zn(2+). NAD(+) is bound by residues Gly-214, Ser-216, Asn-240, Gln-242, and Val-258. Positions 312-334 (KSKPNSPILHRPPKRVKTEAAPS) are disordered.

The protein belongs to the sirtuin family. Class IV subfamily. In terms of assembly, homodimer; binds to nucleosomes and DNA ends as a homodimer. Interacts with RELA; interferes with RELA binding to target DNA. Interacts with SMARCA5; promoting recruitment of SMARCA5/SNF2H to double-strand breaks (DSBs) sites. Interacts with the mTORC2 complex; preventing the ability of SIRT6 to deacetylate FOXO1. Interacts with the CLOCK-BMAL1 complex; recruited by the CLOCK-BMAL1 complex to regulate expression of clock-controlled genes. Interacts with CSNK2A2; preventing CSNK2A2 localization to the nucleus. Zn(2+) serves as cofactor. Acetylated at Lys-33. Deacetylation at Lys-33 by SIRT1 promotes homomultimerization and binding to double-strand breaks (DSBs) sites. In terms of processing, phosphorylation at Ser-10 by MAPK8/JNK1 in response to oxidative stress stimulates the mono-ADP-ribosyltransferase activity on PARP1, leading to PARP1 recruitment to double-strand breaks (DSBs). Post-translationally, monoubiquitinated at Lys-170 by STUB1/CHIP, preventing its degradation by the proteasome. Sumoylated, leading to specifically decrease ability to deacetylate histone H3 at 'Lys-56' (H3K56ac). In terms of tissue distribution, highest levels are found in muscle, thymus, spleen, brain and heart (at protein level).

The protein localises to the nucleus. The protein resides in the chromosome. It is found in the telomere. It localises to the endoplasmic reticulum. It carries out the reaction N(6)-acetyl-L-lysyl-[protein] + NAD(+) + H2O = 2''-O-acetyl-ADP-D-ribose + nicotinamide + L-lysyl-[protein]. It catalyses the reaction N(6)-tetradecanoyl-L-lysyl-[protein] + NAD(+) + H2O = 2''-O-tetradecanoyl-ADP-D-ribose + nicotinamide + L-lysyl-[protein]. The catalysed reaction is N(6)-hexadecanoyl-L-lysyl-[protein] + NAD(+) + H2O = 2''-O-hexadecanoyl-ADP-D-ribose + nicotinamide + L-lysyl-[protein]. The enzyme catalyses L-lysyl-[protein] + NAD(+) = N(6)-(ADP-D-ribosyl)-L-lysyl-[protein] + nicotinamide + H(+). It carries out the reaction L-arginyl-[protein] + NAD(+) = N(omega)-(ADP-D-ribosyl)-L-arginyl-[protein] + nicotinamide + H(+). Compared to the defatty-acylase activity, the protein deacetylase activity is weak in vitro, and requires activation. The histone deacetylase activity is strongly activated upon binding to nucleosomes and chromatin in vivo. Two molecules of SIRT6 associate with the acidic patch of one nucleosome, while the C-terminal disordered region of SIRT6 associates with nucleosomal DNA, leading to efficient histone deacetylation. The protein-lysine deacetylase activity is also activated by long-chain free fatty-acids. In terms of biological role, NAD-dependent protein deacetylase, deacylase and mono-ADP-ribosyltransferase that plays an essential role in DNA damage repair, telomere maintenance, metabolic homeostasis, inflammation, tumorigenesis and aging. Displays protein-lysine deacetylase or defatty-acylase (demyristoylase and depalmitoylase) activity, depending on the context. Acts as a key histone deacetylase by catalyzing deacetylation of histone H3 at 'Lys-9', 'Lys-18' and 'Lys-56' (H3K9ac, H3K18ac and H3K56ac, respectively), suppressing target gene expression of several transcription factors, including NF-kappa-B. Acts as an inhibitor of transcription elongation by mediating deacetylation of H3K9ac and H3K56ac, preventing release of NELFE from chromatin and causing transcriptional pausing. Involved in DNA repair by promoting double-strand break (DSB) repair: acts as a DSB sensor by recognizing and binding DSB sites, leading to (1) recruitment of DNA repair proteins, such as SMARCA5/SNF2H, and (2) deacetylation of histone H3K9ac and H3K56ac. SIRT6 participation to DSB repair is probably involved in extension of life span. Also promotes DNA repair by deacetylating non-histone proteins, such as DDB2 and p53/TP53. Specifically deacetylates H3K18ac at pericentric heterochromatin, thereby maintaining pericentric heterochromatin silencing at centromeres and protecting against genomic instability and cellular senescence. Involved in telomere maintenance by catalyzing deacetylation of histone H3 in telomeric chromatin, regulating telomere position effect and telomere movement in response to DNA damage. Required for embryonic stem cell differentiation by mediating histone deacetylation of H3K9ac. Plays a major role in metabolism by regulating processes such as glycolysis, gluconeogenesis, insulin secretion and lipid metabolism. Inhibits glycolysis via histone deacetylase activity and by acting as a corepressor of the transcription factor HIF1A, thereby controlling the expression of multiple glycolytic genes. Has tumor suppressor activity by repressing glycolysis, thereby inhibiting the Warburg effect. Also regulates glycolysis and tumorigenesis by mediating deacetylation and nuclear export of non-histone proteins, such as isoform M2 of PKM (PKM2). Acts as a negative regulator of gluconeogenesis by mediating deacetylation of non-histone proteins, such as FOXO1 and KAT2A/GCN5. Promotes beta-oxidation of fatty acids during fasting by catalyzing deacetylation of NCOA2, inducing coactivation of PPARA. Acts as a regulator of lipid catabolism in brown adipocytes, both by catalyzing deacetylation of histones and non-histone proteins, such as FOXO1. Also acts as a regulator of circadian rhythms, both by regulating expression of clock-controlled genes involved in lipid and carbohydrate metabolism, and by catalyzing deacetylation of PER2. The defatty-acylase activity is specifically involved in regulation of protein secretion. Has high activity toward long-chain fatty acyl groups and mediates protein-lysine demyristoylation and depalmitoylation of target proteins, such as RRAS2 and TNF, thereby regulating their secretion. Also acts as a mono-ADP-ribosyltransferase by mediating mono-ADP-ribosylation of PARP1, TRIM28/KAP1 or SMARCC2/BAF170. Mono-ADP-ribosyltransferase activity is involved in DNA repair, cellular senescence, repression of LINE-1 retrotransposon elements and regulation of transcription. This chain is NAD-dependent protein deacylase sirtuin-6, found in Mus musculus (Mouse).